A 313-amino-acid polypeptide reads, in one-letter code: Olfactory receptor 51A2 (313 aa).

Over M1–I27 the chain is Extracellular. N5 carries N-linked (GlcNAc...) asparagine glycosylation. Residues W28–L48 traverse the membrane as a helical segment. At F49–S56 the chain is on the cytoplasmic side. Residues L57 to L77 traverse the membrane as a helical segment. Residues S78–A101 lie on the Extracellular side of the membrane. C99 and C191 are joined by a disulfide. Residues Q102–F122 traverse the membrane as a helical segment. Residues D123–V141 are Cytoplasmic-facing. Residues R142 to P162 form a helical membrane-spanning segment. The Extracellular portion of the chain corresponds to F163–V198. The helical transmembrane segment at I199–S218 threads the bilayer. The Cytoplasmic portion of the chain corresponds to Y219 to A238. A helical membrane pass occupies residues L239 to L259. Residues A260 to N274 lie on the Extracellular side of the membrane. The chain crosses the membrane as a helical span at residues V275–V295. Topologically, residues K296–I313 are cytoplasmic.

Belongs to the G-protein coupled receptor 1 family.

It localises to the cell membrane. In terms of biological role, odorant receptor. The polypeptide is Olfactory receptor 51A2 (OR51A2) (Homo sapiens (Human)).